A 395-amino-acid chain; its full sequence is Gastric triacylglycerol lipase (395 aa).

The first 18 residues, 1–18, serve as a signal peptide directing secretion; it reads MWLLLVTSVLSAFGGAHG. Asparagine 33 carries N-linked (GlcNAc...) asparagine glycosylation. The AB hydrolase-1 domain maps to 81–376; the sequence is LQHGLIASAT…LPYNHLDFIW (296 aa). Serine 171 serves as the catalytic Nucleophile. Cysteine 245 and cysteine 254 are disulfide-bonded. Residue asparagine 270 is glycosylated (N-linked (GlcNAc...) asparagine). Catalysis depends on charge relay system residues aspartate 342 and histidine 371.

The protein belongs to the AB hydrolase superfamily. Lipase family.

The protein localises to the secreted. It catalyses the reaction a triacylglycerol + H2O = a diacylglycerol + a fatty acid + H(+). The catalysed reaction is 1,2,3-tri-(9Z-octadecenoyl)-glycerol + H2O = 1,2-di-(9Z-octadecenoyl)-sn-glycerol + (9Z)-octadecenoate + H(+). It carries out the reaction 1,2,3-trioctanoylglycerol + H2O = 1,2-dioctanoyl-sn-glycerol + octanoate + H(+). Its function is as follows. Catalyzes the hydrolysis of triacylglycerols to yield free fatty acids, diacylglycerol, monoacylglycerol, and glycerol. Shows a preferential hydrolysis at the sn-3 position of triacylglycerol. In Mus musculus (Mouse), this protein is Gastric triacylglycerol lipase (Lipf).